The chain runs to 302 residues: Urease accessory protein UreD 2 (302 aa).

The protein belongs to the UreD family. In terms of assembly, ureD, UreF and UreG form a complex that acts as a GTP-hydrolysis-dependent molecular chaperone, activating the urease apoprotein by helping to assemble the nickel containing metallocenter of UreC. The UreE protein probably delivers the nickel.

The protein resides in the cytoplasm. In terms of biological role, required for maturation of urease via the functional incorporation of the urease nickel metallocenter. The sequence is that of Urease accessory protein UreD 2 from Brucella ovis (strain ATCC 25840 / 63/290 / NCTC 10512).